A 390-amino-acid chain; its full sequence is GTPase Obg (390 aa).

The Obg domain maps to 1-159 (MKFVDEASIL…RELLLELMLL (159 aa)). The disordered stretch occupies residues 127–147 (NTRFKSSVNRTPRQKTNGTPG). The span at 129–145 (RFKSSVNRTPRQKTNGT) shows a compositional bias: polar residues. The OBG-type G domain occupies 160–333 (ADVGMLGMPN…LCWDVMTFII (174 aa)). Residues 166–173 (GMPNAGKS), 191–195 (FTTLV), 213–216 (DIPG), 283–286 (NKID), and 314–316 (SAA) each bind GTP. Mg(2+)-binding residues include S173 and T193.

This sequence belongs to the TRAFAC class OBG-HflX-like GTPase superfamily. OBG GTPase family. In terms of assembly, monomer. The cofactor is Mg(2+).

The protein localises to the cytoplasm. In terms of biological role, an essential GTPase which binds GTP, GDP and possibly (p)ppGpp with moderate affinity, with high nucleotide exchange rates and a fairly low GTP hydrolysis rate. Plays a role in control of the cell cycle, stress response, ribosome biogenesis and in those bacteria that undergo differentiation, in morphogenesis control. The chain is GTPase Obg from Escherichia coli O157:H7.